Consider the following 114-residue polypeptide: Probable acid stress chaperone HdeA (114 aa).

Residues 1–26 (MIKALFNKNTALAAVTILALSGGAMA) form the signal peptide. Cys-46 and Cys-94 form a disulfide bridge.

This sequence belongs to the HdeA family.

It localises to the periplasm. Required for optimal acid stress protection. Exhibits a chaperone-like activity only at low pH by suppressing non-specifically the aggregation of denaturated periplasmic proteins. In Brucella suis biovar 1 (strain 1330), this protein is Probable acid stress chaperone HdeA.